The primary structure comprises 360 residues: Chorismate synthase (360 aa).

Residues arginine 48 and arginine 54 each coordinate NADP(+). Residues 125 to 127 (RSS), 246 to 247 (NA), glycine 286, 301 to 305 (KPTSS), and arginine 327 each bind FMN.

This sequence belongs to the chorismate synthase family. Homotetramer. FMNH2 is required as a cofactor.

The enzyme catalyses 5-O-(1-carboxyvinyl)-3-phosphoshikimate = chorismate + phosphate. The protein operates within metabolic intermediate biosynthesis; chorismate biosynthesis; chorismate from D-erythrose 4-phosphate and phosphoenolpyruvate: step 7/7. Functionally, catalyzes the anti-1,4-elimination of the C-3 phosphate and the C-6 proR hydrogen from 5-enolpyruvylshikimate-3-phosphate (EPSP) to yield chorismate, which is the branch point compound that serves as the starting substrate for the three terminal pathways of aromatic amino acid biosynthesis. This reaction introduces a second double bond into the aromatic ring system. The sequence is that of Chorismate synthase from Glaesserella parasuis serovar 5 (strain SH0165) (Haemophilus parasuis).